The sequence spans 374 residues: MRDPAPSDTQKKRVIVGMSGGVDSSVSAVLLMEQGYEVEGLFMKNWEEDDGTEYCTAMDDLADAQAVCDKIGIKLHTANFAAEYWDNVFEHFLAEYKAGRTPNPDILCNREIKFKAFLDYAMMLGADLIATGHYVRRRDIDGRTELLKGLDPNKDQSYFLHAVGGEQIAKTLFPVGELEKPEVRKIAEKHGLATAKKKDSTGICFIGERRFSDFLKQYLPAQPGEIKTTDGEVIGRHHGLMYHTIGQRQGLGIGGLKDAGEEPWYVLVKDLDNNVLIVGQGNEHPLLFSGALLASEIYWVNPIDLSTPRRLTAKVRYRQGDQPCTLEKTATGYRATFDDPQRAVTPGQSVVFYDGEICLGGGVIEVAEAWSNPA.

Residues 17–24 (GMSGGVDS) and Met-43 each bind ATP. An interaction with target base in tRNA region spans residues 103 to 105 (NPD). Cys-108 serves as the catalytic Nucleophile. Cys-108 and Cys-204 are disulfide-bonded. Gly-132 is a binding site for ATP. The interaction with tRNA stretch occupies residues 154–156 (KDQ). The active-site Cysteine persulfide intermediate is the Cys-204. An interaction with tRNA region spans residues 316–317 (RY).

Belongs to the MnmA/TRMU family.

The protein resides in the cytoplasm. It catalyses the reaction S-sulfanyl-L-cysteinyl-[protein] + uridine(34) in tRNA + AH2 + ATP = 2-thiouridine(34) in tRNA + L-cysteinyl-[protein] + A + AMP + diphosphate + H(+). Functionally, catalyzes the 2-thiolation of uridine at the wobble position (U34) of tRNA, leading to the formation of s(2)U34. This is tRNA-specific 2-thiouridylase MnmA from Pseudomonas fluorescens (strain SBW25).